Reading from the N-terminus, the 62-residue chain is Large ribosomal subunit protein uL30 (62 aa).

This sequence belongs to the universal ribosomal protein uL30 family. As to quaternary structure, part of the 50S ribosomal subunit.

The sequence is that of Large ribosomal subunit protein uL30 from Kosmotoga olearia (strain ATCC BAA-1733 / DSM 21960 / TBF 19.5.1).